We begin with the raw amino-acid sequence, 279 residues long: uncharacterized protein (279 aa).

Disordered regions lie at residues 50–109 and 249–279; these read YTYN…YNKN and SQSQ…SPKL. Residues 68-109 are compositionally biased toward low complexity; it reads NNNSNYNNNNNNNNNNNNNNNNNNNNNNNKNNNNNNYNYNKN.

This is an uncharacterized protein from Dictyostelium discoideum (Social amoeba).